A 914-amino-acid polypeptide reads, in one-letter code: DNA mismatch repair protein MutS (914 aa).

Residues 1–24 (MDNKTDNKNNLTPQSAPSSAPHKE) form a disordered region. A compositionally biased stretch (polar residues) spans 8–18 (KNNLTPQSAPS). ATP is bound at residue 662 to 669 (GPNMGGKS).

This sequence belongs to the DNA mismatch repair MutS family.

In terms of biological role, this protein is involved in the repair of mismatches in DNA. It is possible that it carries out the mismatch recognition step. This protein has a weak ATPase activity. The chain is DNA mismatch repair protein MutS from Bartonella henselae (strain ATCC 49882 / DSM 28221 / CCUG 30454 / Houston 1) (Rochalimaea henselae).